Here is a 61-residue protein sequence, read N- to C-terminus: Statherin (61 aa).

The N-terminal stretch at 1-19 (MXFLXFXLXLLXMXXMXXX) is a signal peptide. The tract at residues 20 to 25 (DSSEEK) is hydroxyapatite-binding; inhibits crystal growth. Phosphoserine is present on residues S21 and S22. The disordered stretch occupies residues 37–61 (RYGPYQPFAPQPLYPQPYQPYQPQY). The segment at 37–61 (RYGPYQPFAPQPLYPQPYQPYQPQY) is hydrophobic; inhibits precipitation of calcium phosphate salts. The span at 43–61 (PFAPQPLYPQPYQPYQPQY) shows a compositional bias: pro residues.

Belongs to the histatin/statherin family. In terms of tissue distribution, secreted by parotid and submandibular glands.

It localises to the secreted. Salivary protein that stabilizes saliva supersaturated with calcium salts by inhibiting the precipitation of calcium phosphate salts. It also modulates hydroxyapatite crystal formation on the tooth surface. The protein is Statherin (STATH) of Macaca fascicularis (Crab-eating macaque).